The primary structure comprises 471 residues: Neuraminidase (471 aa).

Over 1–6 (MNPNQK) the chain is Intravirion. Residues 7–27 (LFALSGVAIALSVLNLLIGIS) form a helical membrane-spanning segment. An involved in apical transport and lipid raft association region spans residues 11-33 (SGVAIALSVLNLLIGISNVGLNV). At 28-471 (NVGLNVSLHL…PDGAQIQYFS (444 aa)) the chain is on the virion surface side. 7 N-linked (GlcNAc...) asparagine; by host glycosylation sites follow: Asn-32, Asn-47, Asn-56, Asn-57, Asn-67, Asn-68, and Asn-87. The segment at 36 to 87 (HLKGEGVKQENNLTCTTITQNNTTVVENTYVNNTTIINKGTNLKAPNYLLLN) is hypervariable stalk region. The segment at 90–471 (LCSVEGWVVI…PDGAQIQYFS (382 aa)) is head of neuraminidase. 8 disulfide bridges follow: Cys-91–Cys-419, Cys-123–Cys-128, Cys-183–Cys-230, Cys-232–Cys-237, Cys-278–Cys-291, Cys-280–Cys-289, Cys-318–Cys-336, and Cys-423–Cys-450. Arg-117 contacts substrate. Asn-145 is a glycosylation site (N-linked (GlcNAc...) asparagine; by host). Catalysis depends on Asp-150, which acts as the Proton donor/acceptor. Residue Arg-151 participates in substrate binding. Residues Asn-200 and Asn-234 are each glycosylated (N-linked (GlcNAc...) asparagine; by host). Residue 276-277 (EE) participates in substrate binding. Arg-292 contacts substrate. Asp-293, Gly-297, and Asp-324 together coordinate Ca(2+). Arg-371 contributes to the substrate binding site. Asn-401 carries an N-linked (GlcNAc...) asparagine; by host glycan. Tyr-405 acts as the Nucleophile in catalysis.

It belongs to the glycosyl hydrolase 34 family. Homotetramer. Ca(2+) is required as a cofactor. In terms of processing, N-glycosylated.

It localises to the virion membrane. Its subcellular location is the host apical cell membrane. The catalysed reaction is Hydrolysis of alpha-(2-&gt;3)-, alpha-(2-&gt;6)-, alpha-(2-&gt;8)- glycosidic linkages of terminal sialic acid residues in oligosaccharides, glycoproteins, glycolipids, colominic acid and synthetic substrates.. With respect to regulation, inhibited by the neuraminidase inhibitors zanamivir (Relenza) and oseltamivir (Tamiflu). These drugs interfere with the release of progeny virus from infected cells and are effective against all influenza strains. Resistance to neuraminidase inhibitors is quite rare. Its function is as follows. Catalyzes the removal of terminal sialic acid residues from viral and cellular glycoconjugates. Cleaves off the terminal sialic acids on the glycosylated HA during virus budding to facilitate virus release. Additionally helps virus spread through the circulation by further removing sialic acids from the cell surface. These cleavages prevent self-aggregation and ensure the efficient spread of the progeny virus from cell to cell. Otherwise, infection would be limited to one round of replication. Described as a receptor-destroying enzyme because it cleaves a terminal sialic acid from the cellular receptors. May facilitate viral invasion of the upper airways by cleaving the sialic acid moieties on the mucin of the airway epithelial cells. Likely to plays a role in the budding process through its association with lipid rafts during intracellular transport. May additionally display a raft-association independent effect on budding. Plays a role in the determination of host range restriction on replication and virulence. Sialidase activity in late endosome/lysosome traffic seems to enhance virus replication. The polypeptide is Neuraminidase (Aves (Horse)).